Here is a 962-residue protein sequence, read N- to C-terminus: Glycine dehydrogenase (decarboxylating) (962 aa).

Lysine 709 bears the N6-(pyridoxal phosphate)lysine mark.

It belongs to the GcvP family. The glycine cleavage system is composed of four proteins: P, T, L and H. Pyridoxal 5'-phosphate is required as a cofactor.

The catalysed reaction is N(6)-[(R)-lipoyl]-L-lysyl-[glycine-cleavage complex H protein] + glycine + H(+) = N(6)-[(R)-S(8)-aminomethyldihydrolipoyl]-L-lysyl-[glycine-cleavage complex H protein] + CO2. In terms of biological role, the glycine cleavage system catalyzes the degradation of glycine. The P protein binds the alpha-amino group of glycine through its pyridoxal phosphate cofactor; CO(2) is released and the remaining methylamine moiety is then transferred to the lipoamide cofactor of the H protein. The sequence is that of Glycine dehydrogenase (decarboxylating) from Shewanella baltica (strain OS195).